A 145-amino-acid chain; its full sequence is UPF0735 ACT domain-containing protein CLH_2637 (145 aa).

An ACT domain is found at 69-144 (TFNLIVKDQT…YVEKIEFVAM (76 aa)).

The protein belongs to the UPF0735 family.

The chain is UPF0735 ACT domain-containing protein CLH_2637 from Clostridium botulinum (strain Alaska E43 / Type E3).